A 471-amino-acid chain; its full sequence is Serine hydroxymethyltransferase 4 (471 aa).

At Met1 the chain carries N-acetylmethionine. Ser39 is a binding site for L-serine. Ser39, Tyr59, and Glu61 together coordinate pemetrexed. Residues Glu61 and Tyr69 each coordinate L-serine. Pemetrexed is bound by residues 105–107 (SGS), His134, Ser190, and His218. L-serine contacts are provided by His218 and Lys244. Lys244 is subject to N6-(pyridoxal phosphate)lysine. Gly290 is a binding site for pemetrexed. Lys373 provides a ligand contact to methotrexate. An L-serine-binding site is contributed by Arg389. Residue Arg389 coordinates pemetrexed.

It belongs to the SHMT family. As to quaternary structure, homotetramer. Interacts with UBP16. Pyridoxal 5'-phosphate serves as cofactor. Mostly expressed in flowers, less abundant in roots, inflorescence stems, and siliques, and barely detectable in leaves.

The protein localises to the cytoplasm. The enzyme catalyses (6R)-5,10-methylene-5,6,7,8-tetrahydrofolate + glycine + H2O = (6S)-5,6,7,8-tetrahydrofolate + L-serine. Its pathway is one-carbon metabolism; tetrahydrofolate interconversion. Inhibited by the antifolate drugs methotrexate and pemetrexed. Functionally, catalyzes the interconversion of serine and glycine with the conversion of tetrahydrofolate (THF) into 5,10-methylene-THF. This chain is Serine hydroxymethyltransferase 4, found in Arabidopsis thaliana (Mouse-ear cress).